Consider the following 335-residue polypeptide: Leukocyte cell-derived chemotaxin 1 (335 aa).

The chain crosses the membrane as a helical span at residues 45–65 (VVLISGAVLLLLGAIGAFYFW). In terms of domain architecture, BRICHOS spans 104-201 (GSGAEEAVEV…LCGDLPIFWL (98 aa)). Cysteine 131 and cysteine 193 are joined by a disulfide. Residues 211-214 (RERR) constitute a propeptide that is removed on maturation. Residues 221 to 269 (VTTTTTRRLRSGPQGTPAPGRPNNGTRPSVQEDAEPFNPDNPYHQQEGE) are disordered. N-linked (GlcNAc...) asparagine; in variant 223-N-E-224 glycosylation is present at threonine 223. A glycan (O-linked (GalNAc...) threonine; partial) is linked at threonine 236. N-linked (GlcNAc...) asparagine glycosylation occurs at asparagine 244. 4 disulfides stabilise this stretch: cysteine 283–cysteine 287, cysteine 284–cysteine 324, cysteine 294–cysteine 318, and cysteine 298–cysteine 314.

It belongs to the chondromodulin-1 family. Post-translationally, after cleavage, the post-translationally modified ChM-I is secreted as a glycoprotein. In terms of processing, two other smaller nonglycosylated chondromodulin forms (9 kDa and 7 kDa) are found either in developing articular cartilage or in chondrocytes. The 9 kDa form could be processed by an extracellular matrix-associated protease as a metalloproteinase and the 7 kDa form could be processed intracellularly. Nasal and articular cartilage, and fetal epiphysis.

It localises to the secreted. Its subcellular location is the extracellular space. It is found in the extracellular matrix. The protein resides in the endomembrane system. Functionally, bifunctional growth regulator that stimulates the growth of cultured chondrocytes in the presence of basic fibroblast growth factor (FGF) but inhibits the growth of cultured vascular endothelial cells. May contribute to the rapid growth of cartilage and vascular invasion prior to the replacement of cartilage by bone during endochondral bone development. Inhibits in vitro tube formation and mobilization of endothelial cells. Plays a role as antiangiogenic factor in cardiac valves to suppress neovascularization. This is Leukocyte cell-derived chemotaxin 1 from Bos taurus (Bovine).